Reading from the N-terminus, the 228-residue chain is 7-cyano-7-deazaguanine synthase (228 aa).

An ATP-binding site is contributed by 7–17; the sequence is LSGGLDSAVNL. Positions 192, 200, 203, and 206 each coordinate Zn(2+).

Belongs to the QueC family. As to quaternary structure, homodimer. Zn(2+) serves as cofactor.

The catalysed reaction is 7-carboxy-7-deazaguanine + NH4(+) + ATP = 7-cyano-7-deazaguanine + ADP + phosphate + H2O + H(+). It participates in purine metabolism; 7-cyano-7-deazaguanine biosynthesis. In terms of biological role, catalyzes the ATP-dependent conversion of 7-carboxy-7-deazaguanine (CDG) to 7-cyano-7-deazaguanine (preQ(0)). The sequence is that of 7-cyano-7-deazaguanine synthase from Desulforamulus reducens (strain ATCC BAA-1160 / DSM 100696 / MI-1) (Desulfotomaculum reducens).